Consider the following 240-residue polypeptide: Ribonuclease HII (240 aa).

An RNase H type-2 domain is found at 29 to 220 (EPIAGVDEAG…VRRAAGLEPL (192 aa)). D35, E36, and D129 together coordinate a divalent metal cation.

Belongs to the RNase HII family. The cofactor is Mn(2+). Requires Mg(2+) as cofactor.

It is found in the cytoplasm. It carries out the reaction Endonucleolytic cleavage to 5'-phosphomonoester.. In terms of biological role, endonuclease that specifically degrades the RNA of RNA-DNA hybrids. In Nocardioides sp. (strain ATCC BAA-499 / JS614), this protein is Ribonuclease HII.